The chain runs to 125 residues: Small ribosomal subunit protein bS6 (125 aa).

Positions 99–125 are disordered; that stretch reads ASPMVKAREERKPLTEVENNDFEDAEE. The segment covering 104–113 has biased composition (basic and acidic residues); that stretch reads KAREERKPLT. Acidic residues predominate over residues 116–125; it reads ENNDFEDAEE.

Belongs to the bacterial ribosomal protein bS6 family.

Binds together with bS18 to 16S ribosomal RNA. The protein is Small ribosomal subunit protein bS6 of Histophilus somni (strain 2336) (Haemophilus somnus).